The primary structure comprises 171 residues: Stage III sporulation protein AB (171 aa).

The sequence is that of Stage III sporulation protein AB (spoIIIAB) from Bacillus subtilis (strain 168).